The chain runs to 208 residues: Large ribosomal subunit protein uL3 (208 aa).

Residues 116 to 148 (GFQGVIKRHGQSRGPMAHGSRYHRRPGSMGPVA) form a disordered region.

Belongs to the universal ribosomal protein uL3 family. As to quaternary structure, part of the 50S ribosomal subunit. Forms a cluster with proteins L14 and L19.

Functionally, one of the primary rRNA binding proteins, it binds directly near the 3'-end of the 23S rRNA, where it nucleates assembly of the 50S subunit. The polypeptide is Large ribosomal subunit protein uL3 (Streptococcus pyogenes serotype M12 (strain MGAS2096)).